A 233-amino-acid polypeptide reads, in one-letter code: Membrane glycoprotein UL9 (233 aa).

Positions M1–S20 are cleaved as a signal peptide. 5 N-linked (GlcNAc...) asparagine; by host glycosylation sites follow: N40, N94, N101, N131, and N169. A helical membrane pass occupies residues M194–P214.

The protein belongs to the HHV-5 UL9 family.

The protein localises to the host membrane. The polypeptide is Membrane glycoprotein UL9 (UL9) (Homo sapiens (Human)).